A 407-amino-acid polypeptide reads, in one-letter code: MDIILGVVMFTLIVLALVLVILFAKSKLVPTGDITISINGDADKSIVTSPGGKLLSALAGAGVFVSSACGGGGSCGQCRVKVKSGGGDILPTELDHITKGEAREGERLACQVAVKTDMDIELPEEIFGVKKWECTVISNDNKATFIKELKLQIPDGESVPFRAGGYIQIEAPAHHVKYADFDVPEEYRGDWDKFNLFRYESIVKEDIIRAYSMANYPEEFGIIMLNVRIATPPPNNPDVAPGQMSSYIWSLKEGDKCTISGPFGEFFAKDTDAEMVFIGGGAGMAPMRSHIFDQLKRLKSKRKMSYWYGARSKREMFYVEDFDGLAAENDNFVWHCALSDPLPEDNWDGYTGFIHNVLYENYLRDHDAPEDCEYYMCGPPMMNAAVIGMLKNLGVEDENILLDDFGG.

Residues I3–F23 form a helical membrane-spanning segment. A 2Fe-2S ferredoxin-type domain is found at G32–I126. Residues C69, C75, C78, and C110 each coordinate [2Fe-2S] cluster. The FAD-binding FR-type domain occupies V129–K269. Residues D272–M389 form a catalytic region.

The protein belongs to the NqrF family. In terms of assembly, composed of six subunits; NqrA, NqrB, NqrC, NqrD, NqrE and NqrF. [2Fe-2S] cluster serves as cofactor. It depends on FAD as a cofactor.

It localises to the cell inner membrane. It catalyses the reaction a ubiquinone + n Na(+)(in) + NADH + H(+) = a ubiquinol + n Na(+)(out) + NAD(+). Its function is as follows. NQR complex catalyzes the reduction of ubiquinone-1 to ubiquinol by two successive reactions, coupled with the transport of Na(+) ions from the cytoplasm to the periplasm. The first step is catalyzed by NqrF, which accepts electrons from NADH and reduces ubiquinone-1 to ubisemiquinone by a one-electron transfer pathway. This is Na(+)-translocating NADH-quinone reductase subunit F from Vibrio vulnificus (strain CMCP6).